The following is a 301-amino-acid chain: MGSRYQRLEKIGEGSYGVVYRARDITTDVIVALKRIRLESVEEGVPCTAIREISILKELRHENIVRLLDVCHSENRLNLVFEYMEMDLKKYMDRASGNLDPATIQEFMRSLLKGVRFCHERNVLHRDLKPPNLLISREKELKLADFGLGRAFGIPVKKYTHEVVTLWYRSPDVLLGSTQYGTPVDIWSVGCIFAEMAIGAPLFAGKNDADQLLRIFRFLGTPSSQVWPSMNLYPNSTNMLSKPEFQQNLIATCDEQFQTHPAYAKLGPQGIDLLRRLLRYEPGERLTAAQALEHPYFSVEF.

Residues 5-297 (YQRLEKIGEG…AAQALEHPYF (293 aa)) form the Protein kinase domain. ATP is bound by residues 11-19 (IGEGSYGVV) and Lys34. Position 15 is a phosphoserine (Ser15). A Phosphotyrosine modification is found at Tyr16. The active-site Proton acceptor is Asp127. Thr160 carries the phosphothreonine; by CAK modification.

It belongs to the protein kinase superfamily. CMGC Ser/Thr protein kinase family. CDC2/CDKX subfamily. Forms a stable but non-covalent complex with a regulatory subunit and with a cyclin.

It carries out the reaction L-seryl-[protein] + ATP = O-phospho-L-seryl-[protein] + ADP + H(+). It catalyses the reaction L-threonyl-[protein] + ATP = O-phospho-L-threonyl-[protein] + ADP + H(+). With respect to regulation, phosphorylation at Ser-15 or Tyr-16 inactivates the enzyme, while phosphorylation at Thr-160 activates it. Its function is as follows. Probably involved in the control of the cell cycle. The sequence is that of Cell division control protein 2 homolog 1 (CRK1) from Trypanosoma congolense.